The primary structure comprises 881 residues: Valine--tRNA ligase (881 aa).

The 'HIGH' region motif lies at 48-58 (PNITGKLHLGH). The short motif at 527–531 (KMSKS) is the 'KMSKS' region element. Lys-530 contacts ATP. Coiled coils occupy residues 721–747 (KNETSENAMNQIIEAIKSIRNVRAEMN) and 811–881 (LLDL…AALK).

Belongs to the class-I aminoacyl-tRNA synthetase family. ValS type 1 subfamily. Monomer.

It is found in the cytoplasm. The enzyme catalyses tRNA(Val) + L-valine + ATP = L-valyl-tRNA(Val) + AMP + diphosphate. Its function is as follows. Catalyzes the attachment of valine to tRNA(Val). As ValRS can inadvertently accommodate and process structurally similar amino acids such as threonine, to avoid such errors, it has a 'posttransfer' editing activity that hydrolyzes mischarged Thr-tRNA(Val) in a tRNA-dependent manner. The polypeptide is Valine--tRNA ligase (Clostridium acetobutylicum (strain ATCC 824 / DSM 792 / JCM 1419 / IAM 19013 / LMG 5710 / NBRC 13948 / NRRL B-527 / VKM B-1787 / 2291 / W)).